A 121-amino-acid polypeptide reads, in one-letter code: UPF0102 protein VP0448 (121 aa).

This sequence belongs to the UPF0102 family.

This Vibrio parahaemolyticus serotype O3:K6 (strain RIMD 2210633) protein is UPF0102 protein VP0448.